Reading from the N-terminus, the 244-residue chain is MRDRISAFLEEKQGLSVNSKQSYKYDLEQFLDMVGERISETSLKIYQAQLANLKISAQKRKISACNQFLYFLYQKGEVDSFYRLELAKQAEKKTEKPEILYLDSFWQESDHPEGRLLALLILEMGLLPSEILAIKVADINLDFQVLRISKASQRRIVTIPTALLSELEPLMGQTYLFERGGKPYSRQWAFRQLESFVKEKGFPSLSAQVLREQFILRQIENKVDLYEIAKKLGLKTVLTLEKYR.

Residues 1 to 73 (MRDRISAFLE…ACNQFLYFLY (73 aa)) enclose the Core-binding (CB) domain. One can recognise a Tyr recombinase domain in the interval 90-244 (AEKKTEKPEI…KTVLTLEKYR (155 aa)). Residues Lys150 and Arg211 contribute to the active site. The O-(3'-phospho-DNA)-tyrosine intermediate role is filled by Tyr243.

Belongs to the 'phage' integrase family. XerD-like subfamily.

The protein resides in the cytoplasm. Functionally, putative tyrosine recombinase. Not involved in the cutting and rejoining of the recombining DNA molecules on dif(SL) site. This Streptococcus pneumoniae (strain Hungary19A-6) protein is Tyrosine recombinase XerD-like.